A 214-amino-acid polypeptide reads, in one-letter code: Large ribosomal subunit protein uL6m (214 aa).

The N-terminal 16 residues, 1 to 16 (MSFIQRRLLSQTLFLR), are a transit peptide targeting the mitochondrion.

This sequence belongs to the universal ribosomal protein uL6 family. Component of the mitochondrial large ribosomal subunit (mt-LSU). Mature yeast 74S mitochondrial ribosomes consist of a small (37S) and a large (54S) subunit. The 37S small subunit contains a 15S ribosomal RNA (15S mt-rRNA) and 34 different proteins. The 54S large subunit contains a 21S rRNA (21S mt-rRNA) and 46 different proteins.

The protein resides in the mitochondrion. In terms of biological role, component of the mitochondrial ribosome (mitoribosome), a dedicated translation machinery responsible for the synthesis of mitochondrial genome-encoded proteins, including at least some of the essential transmembrane subunits of the mitochondrial respiratory chain. The mitoribosomes are attached to the mitochondrial inner membrane and translation products are cotranslationally integrated into the membrane. The polypeptide is Large ribosomal subunit protein uL6m (MRPL6) (Saccharomyces cerevisiae (strain ATCC 204508 / S288c) (Baker's yeast)).